Consider the following 88-residue polypeptide: Putative membrane protein insertion efficiency factor (88 aa).

It belongs to the UPF0161 family.

The protein localises to the cell inner membrane. In terms of biological role, could be involved in insertion of integral membrane proteins into the membrane. This Koribacter versatilis (strain Ellin345) protein is Putative membrane protein insertion efficiency factor.